Consider the following 117-residue polypeptide: G antigen 13 (117 aa).

The interval 1–117 (MSWRGRSTYY…PEEGEKQSQC (117 aa)) is disordered. Acidic residues-rich tracts occupy residues 32-45 (FSDE…EEGE) and 87-96 (ECEDGPDGQE). The span at 103 to 117 (EEVKTPEEGEKQSQC) shows a compositional bias: basic and acidic residues.

The protein belongs to the GAGE family.

This is G antigen 13 from Homo sapiens (Human).